The sequence spans 329 residues: MKAAITTTAKYLPEEIMSNQDLERILDTNDEWITTRTGIKERRILRDPKKATSYMCTEVARQLLEKRGISADEIDLIIVATMSPDMLFPSTACLVQGNIQAKNAWGFDLSAACSGFVYGLYTGAQFIESGNCKKVMVIGADKMSSILDYEDRTTAILFGDGAGGVILEAANEEGYGVLDARLYSDGLNGREHLLMPGGGSLHPASHETVDQHMHFIQQDGKQVFKAAVIAMADVAEEIMQRNNLTAETIDWLVPHQANQRIIHATAERMGITEEKVMMNIARYGNTTAGTVPICLAELDEQGKLHKGSNLVLVSFGAGYTWGGVYVRWQ.

Active-site residues include Cys-113 and His-255. The tract at residues 256–260 (QANQR) is ACP-binding. Residue Asn-285 is part of the active site.

This sequence belongs to the thiolase-like superfamily. FabH family. Homodimer.

Its subcellular location is the cytoplasm. The catalysed reaction is malonyl-[ACP] + acetyl-CoA + H(+) = 3-oxobutanoyl-[ACP] + CO2 + CoA. Its pathway is lipid metabolism; fatty acid biosynthesis. In terms of biological role, catalyzes the condensation reaction of fatty acid synthesis by the addition to an acyl acceptor of two carbons from malonyl-ACP. Catalyzes the first condensation reaction which initiates fatty acid synthesis and may therefore play a role in governing the total rate of fatty acid production. Possesses both acetoacetyl-ACP synthase and acetyl transacylase activities. Its substrate specificity determines the biosynthesis of branched-chain and/or straight-chain of fatty acids. The polypeptide is Beta-ketoacyl-[acyl-carrier-protein] synthase III (Chlorobaculum tepidum (strain ATCC 49652 / DSM 12025 / NBRC 103806 / TLS) (Chlorobium tepidum)).